We begin with the raw amino-acid sequence, 444 residues long: Spermidine/putrescine import ATP-binding protein PotA (444 aa).

Residues 11–332 (ISLVDVDKEF…PVNKWVANFI (322 aa)) enclose the ABC transporter domain. Position 43-50 (43-50 (GPSGSGKT)) interacts with ATP. The tract at residues 111-201 (RIKKKAEEIP…ESFKKKYLTR (91 aa)) is insert.

Belongs to the ABC transporter superfamily. Spermidine/putrescine importer (TC 3.A.1.11.1) family. As to quaternary structure, the complex is composed of two ATP-binding proteins (PotA), two transmembrane proteins (PotB and PotC) and a solute-binding protein (PotD).

The protein localises to the cell membrane. It carries out the reaction ATP + H2O + polyamine-[polyamine-binding protein]Side 1 = ADP + phosphate + polyamineSide 2 + [polyamine-binding protein]Side 1.. Functionally, part of the ABC transporter complex PotABCD involved in spermidine/putrescine import. Responsible for energy coupling to the transport system. The sequence is that of Spermidine/putrescine import ATP-binding protein PotA from Mesomycoplasma hyopneumoniae (strain J / ATCC 25934 / NCTC 10110) (Mycoplasma hyopneumoniae).